The sequence spans 638 residues: ATP-dependent zinc metalloprotease FtsH (638 aa).

The Cytoplasmic segment spans residues 1–11 (MSQKGKNKKWR). A helical membrane pass occupies residues 12 to 32 (SAGLYALLAIVLISLATTFLG). At 33 to 114 (NRPPERLEIS…LAVRPVQEEG (82 aa)) the chain is on the lumenal side. The chain crosses the membrane as a helical span at residues 115–135 (LLGRILSTFFLPVLLLLGLFF). Topologically, residues 136–638 (LLRRAQNGPG…TLPMAVNAGA (503 aa)) are cytoplasmic. 209–216 (GPPGTGKT) contributes to the ATP binding site. H431 is a Zn(2+) binding site. Residue E432 is part of the active site. Positions 435 and 510 each coordinate Zn(2+).

The protein in the central section; belongs to the AAA ATPase family. This sequence in the C-terminal section; belongs to the peptidase M41 family. In terms of assembly, homohexamer. Zn(2+) serves as cofactor.

Its subcellular location is the cellular thylakoid membrane. Acts as a processive, ATP-dependent zinc metallopeptidase for both cytoplasmic and membrane proteins. Plays a role in the quality control of integral membrane proteins. The chain is ATP-dependent zinc metalloprotease FtsH from Synechococcus sp. (strain JA-2-3B'a(2-13)) (Cyanobacteria bacterium Yellowstone B-Prime).